We begin with the raw amino-acid sequence, 509 residues long: 2,3-bisphosphoglycerate-independent phosphoglycerate mutase (509 aa).

Asp-11 is a binding site for Mn(2+). At Tyr-35 the chain carries Phosphotyrosine. Ser-61 provides a ligand contact to Mn(2+). Ser-61 serves as the catalytic Phosphoserine intermediate. Substrate is bound by residues His-122, 152–153, Arg-184, Arg-190, 260–263, and Lys-335; these read RD and RPDR. Residues Asp-402, His-406, Asp-443, His-444, and His-461 each coordinate Mn(2+).

The protein belongs to the BPG-independent phosphoglycerate mutase family. As to quaternary structure, monomer. It depends on Mn(2+) as a cofactor.

The catalysed reaction is (2R)-2-phosphoglycerate = (2R)-3-phosphoglycerate. It participates in carbohydrate degradation; glycolysis; pyruvate from D-glyceraldehyde 3-phosphate: step 3/5. In terms of biological role, essential for rapid growth and for sporulation. Catalyzes the interconversion of 2-phosphoglycerate and 3-phosphoglycerate. The sequence is that of 2,3-bisphosphoglycerate-independent phosphoglycerate mutase from Bacillus anthracis.